We begin with the raw amino-acid sequence, 289 residues long: Pseudouridine-5'-phosphate glycosidase (289 aa).

Catalysis depends on Glu10, which acts as the Proton donor. Substrate is bound by residues Lys71 and Val91. A Mn(2+)-binding site is contributed by Asp121. 123 to 125 provides a ligand contact to substrate; the sequence is SQD. The Nucleophile role is filled by Lys142.

This sequence belongs to the pseudouridine-5'-phosphate glycosidase family. As to quaternary structure, homotrimer. It depends on Mn(2+) as a cofactor.

The catalysed reaction is D-ribose 5-phosphate + uracil = psi-UMP + H2O. In terms of biological role, catalyzes the reversible cleavage of pseudouridine 5'-phosphate (PsiMP) to ribose 5-phosphate and uracil. Functions biologically in the cleavage direction, as part of a pseudouridine degradation pathway. The sequence is that of Pseudouridine-5'-phosphate glycosidase from Kosmotoga olearia (strain ATCC BAA-1733 / DSM 21960 / TBF 19.5.1).